Consider the following 324-residue polypeptide: [Acyl-carrier-protein] phosphodiesterase PptH (324 aa).

Residues D22, H24, and D51 each contribute to the Mn(2+) site. Residues D51, N79, H205, and H246 each contribute to the Fe cation site. Position 248 (H248) interacts with Mn(2+).

This sequence belongs to the metallophosphoesterase superfamily. Fe(3+) serves as cofactor. Requires Mn(2+) as cofactor.

It catalyses the reaction holo-[ACP] + H2O = apo-[ACP] + (R)-4'-phosphopantetheine + H(+). Functionally, catalyzes the hydrolysis of the phosphopantetheine group from substrate holo-carrier proteins. The protein is [Acyl-carrier-protein] phosphodiesterase PptH of Mycobacterium tuberculosis (strain ATCC 25618 / H37Rv).